Here is a 139-residue protein sequence, read N- to C-terminus: Plasmid stability protein StbB (139 aa).

The PINc domain maps to 2 to 136 (ILLDTNVISE…EAAGLNVINP (135 aa)). 2 residues coordinate Mg(2+): Asp5 and Asp104.

The protein belongs to the PINc/VapC protein family. Requires Mg(2+) as cofactor.

Toxic component of a type II toxin-antitoxin (TA) system. An RNase. Involved in plasmid stability. In Pseudomonas syringae pv. tomato (strain ATCC BAA-871 / DC3000), this protein is Plasmid stability protein StbB (stbB).